Here is a 294-residue protein sequence, read N- to C-terminus: ATP synthase gamma chain (294 aa).

The protein belongs to the ATPase gamma chain family. F-type ATPases have 2 components, CF(1) - the catalytic core - and CF(0) - the membrane proton channel. CF(1) has five subunits: alpha(3), beta(3), gamma(1), delta(1), epsilon(1). CF(0) has three main subunits: a, b and c.

The protein localises to the cell membrane. Its function is as follows. Produces ATP from ADP in the presence of a proton gradient across the membrane. The gamma chain is believed to be important in regulating ATPase activity and the flow of protons through the CF(0) complex. This is ATP synthase gamma chain from Opitutus terrae (strain DSM 11246 / JCM 15787 / PB90-1).